A 1009-amino-acid chain; its full sequence is Probable beta-galactosidase B (1009 aa).

The N-terminal stretch at 1 to 27 (MKTIAGLSWISALSSLASLPNGLGVSA) is a signal peptide. Tyr-96 provides a ligand contact to substrate. Asn-106 carries an N-linked (GlcNAc...) asparagine glycan. Positions 141, 142, 143, and 201 each coordinate substrate. Glu-202 functions as the Proton donor in the catalytic mechanism. Tyr-271 is a substrate binding site. Cysteines 277 and 330 form a disulfide. Residue Glu-314 is the Nucleophile of the active site. Tyr-379 is a substrate binding site. N-linked (GlcNAc...) asparagine glycans are attached at residues Asn-467, Asn-495, Asn-547, Asn-593, Asn-632, Asn-672, Asn-707, Asn-775, Asn-782, Asn-789, Asn-795, and Asn-914.

This sequence belongs to the glycosyl hydrolase 35 family.

The protein resides in the secreted. The enzyme catalyses Hydrolysis of terminal non-reducing beta-D-galactose residues in beta-D-galactosides.. In terms of biological role, cleaves beta-linked terminal galactosyl residues from gangliosides, glycoproteins, and glycosaminoglycans. In Pyrenophora tritici-repentis (strain Pt-1C-BFP) (Wheat tan spot fungus), this protein is Probable beta-galactosidase B (lacB).